We begin with the raw amino-acid sequence, 265 residues long: Anamorsin homolog 1 (265 aa).

Residues 1-143 form an N-terminal SAM-like domain region; that stretch reads MAATAAAALA…KASWSMGSSF (143 aa). A linker region spans residues 144-175; sequence PLKKATKGLPKIQIDDDSELIDEDSLLTEDDL. Cys186, Cys195, Cys198, and Cys200 together coordinate [2Fe-2S] cluster. The segment at 186–200 is fe-S binding site A; the sequence is CEVGATRKACKNCTC. [4Fe-4S] cluster is bound by residues Cys226, Cys229, Cys237, and Cys240. Short sequence motifs (cx2C motif) lie at residues 226–229 and 237–240; these read CGNC and CGTC. Residues 226–240 are fe-S binding site B; sequence CGNCGLGDAFRCGTC.

This sequence belongs to the anamorsin family. In terms of assembly, monomer. It depends on [2Fe-2S] cluster as a cofactor. [4Fe-4S] cluster serves as cofactor.

It localises to the cytoplasm. The protein localises to the mitochondrion intermembrane space. In terms of biological role, component of the cytosolic iron-sulfur (Fe-S) protein assembly (CIA) machinery. Required for the maturation of extramitochondrial Fe-S proteins. Part of an electron transfer chain functioning in an early step of cytosolic Fe-S biogenesis, facilitating the de novo assembly of a [4Fe-4S] cluster on the cytosolic Fe-S scaffold complex. Electrons are transferred from NADPH via a FAD- and FMN-containing diflavin oxidoreductase. Together with the diflavin oxidoreductase, also required for the assembly of the diferric tyrosyl radical cofactor of ribonucleotide reductase (RNR), probably by providing electrons for reduction during radical cofactor maturation in the catalytic small subunit. This Oryza sativa subsp. indica (Rice) protein is Anamorsin homolog 1.